A 55-amino-acid polypeptide reads, in one-letter code: Large ribosomal subunit protein bL33 (55 aa).

Residues 1 to 11 (MAKGSREKIKL) are compositionally biased toward basic and acidic residues. The tract at residues 1 to 32 (MAKGSREKIKLESSASTGHFYTTSKNKRTKPE) is disordered. Residues 13–24 (SSASTGHFYTTS) are compositionally biased toward polar residues.

Belongs to the bacterial ribosomal protein bL33 family.

This Polynucleobacter necessarius subsp. necessarius (strain STIR1) protein is Large ribosomal subunit protein bL33.